The chain runs to 178 residues: Large ribosomal subunit protein uL13m (178 aa).

It belongs to the universal ribosomal protein uL13 family. Component of the mitochondrial ribosome large subunit (39S) which comprises a 16S rRNA and about 50 distinct proteins.

The protein localises to the mitochondrion. The sequence is that of Large ribosomal subunit protein uL13m (mRpL13) from Drosophila melanogaster (Fruit fly).